Consider the following 540-residue polypeptide: Probable feruloyl esterase B-1 (540 aa).

The N-terminal stretch at 1-18 (MLVMQLLLPFLASTAAAA) is a signal peptide. Asn-28, Asn-49, Asn-66, Asn-95, Asn-113, and Asn-195 each carry an N-linked (GlcNAc...) asparagine glycan. 2 cysteine pairs are disulfide-bonded: Cys-41–Cys-90 and Cys-76–Cys-129. Cystine bridges form between Cys-202–Cys-458, Cys-271–Cys-288, and Cys-297–Cys-308. Residue Ser-203 is the Acyl-ester intermediate of the active site. N-linked (GlcNAc...) asparagine glycosylation occurs at Asn-234. Ca(2+) contacts are provided by Asp-272, Asp-275, Ala-277, Asp-279, and Ile-281. N-linked (GlcNAc...) asparagine glycosylation is found at Asn-298, Asn-328, and Asn-367. Active-site charge relay system residues include Asp-417 and His-457. An N-linked (GlcNAc...) asparagine glycan is attached at Asn-506. A disulfide bridge connects residues Cys-517 and Cys-539.

This sequence belongs to the tannase family. In terms of assembly, homodimer.

The protein localises to the secreted. It catalyses the reaction feruloyl-polysaccharide + H2O = ferulate + polysaccharide.. Involved in degradation of plant cell walls. Hydrolyzes the feruloyl-arabinose ester bond in arabinoxylans as well as the feruloyl-galactose and feruloyl-arabinose ester bonds in pectin. This is Probable feruloyl esterase B-1 (faeB-1) from Aspergillus oryzae (strain ATCC 42149 / RIB 40) (Yellow koji mold).